The sequence spans 337 residues: Tetraacyldisaccharide 4'-kinase (337 aa).

55–62 contributes to the ATP binding site; it reads TIGGNGKT.

The protein belongs to the LpxK family.

It catalyses the reaction a lipid A disaccharide + ATP = a lipid IVA + ADP + H(+). The protein operates within glycolipid biosynthesis; lipid IV(A) biosynthesis; lipid IV(A) from (3R)-3-hydroxytetradecanoyl-[acyl-carrier-protein] and UDP-N-acetyl-alpha-D-glucosamine: step 6/6. In terms of biological role, transfers the gamma-phosphate of ATP to the 4'-position of a tetraacyldisaccharide 1-phosphate intermediate (termed DS-1-P) to form tetraacyldisaccharide 1,4'-bis-phosphate (lipid IVA). This Blochmanniella pennsylvanica (strain BPEN) protein is Tetraacyldisaccharide 4'-kinase.